Consider the following 147-residue polypeptide: uncharacterized protein (147 aa).

Positions 44-147 (LVGYIDKEIH…LKSIKERLSI (104 aa)) constitute an HTH LytTR-type domain.

The protein resides in the cytoplasm. This is an uncharacterized protein from Staphylococcus aureus (strain COL).